The primary structure comprises 168 residues: Cytochrome c-type biogenesis protein CcmE (168 aa).

Over 1–7 (MTRKKRR) the chain is Cytoplasmic. The chain crosses the membrane as a helical; Signal-anchor for type II membrane protein span at residues 8–28 (LYMLGLALLGLGTATALTLSA). Residues 29–168 (FEENIVFFYS…KVHATTTLKP (140 aa)) are Periplasmic-facing. Positions 122 and 126 each coordinate heme. The tract at residues 149–168 (SIYTPADSDDKVHATTTLKP) is disordered.

This sequence belongs to the CcmE/CycJ family.

The protein localises to the cell inner membrane. In terms of biological role, heme chaperone required for the biogenesis of c-type cytochromes. Transiently binds heme delivered by CcmC and transfers the heme to apo-cytochromes in a process facilitated by CcmF and CcmH. This chain is Cytochrome c-type biogenesis protein CcmE, found in Rhodospirillum centenum (strain ATCC 51521 / SW).